A 356-amino-acid chain; its full sequence is Protein HEXIM1 (356 aa).

Composition is skewed to basic and acidic residues over residues 1 to 11 and 24 to 47; these read MAEPLLSEHQH and VHEE…DSRW. The segment at 1–160 is disordered; it reads MAEPLLSEHQ…RRRPSKKKRH (160 aa). Residues 48–58 are compositionally biased toward polar residues; that stretch reads QSRASLQSGSR. Positions 84–93 are enriched in basic and acidic residues; the sequence is CLEKGEKGQN. A phosphoserine mark is found at Ser-98 and Ser-103. Over residues 145-160 the composition is skewed to basic residues; the sequence is LGKKKHRRRPSKKKRH. The basic region; mediates nuclear localization and interaction with 7SK snRNA and NR3C1 stretch occupies residues 147–174; the sequence is KKKHRRRPSKKKRHWKPYYKLTWEEKKK. The segment at 199-202 is interaction with P-TEFb; that stretch reads PYNT. An autoinhibitory acidic region; in absence of 7SK snRNA interacts with the basic region preventing interaction with P-TEFb and modulating subcellular localization region spans residues 207 to 247; the sequence is MDDHDQEEPDLKTGLYPKRAAAKSDDTSDEDFVEEAGEEDG. Positions 209–259 are disordered; sequence DHDQEEPDLKTGLYPKRAAAKSDDTSDEDFVEEAGEEDGGSDGMGGDGSEF. A Phosphoserine modification is found at Ser-230. Phosphothreonine is present on Thr-233. Residues 233-248 show a composition bias toward acidic residues; sequence TSDEDFVEEAGEEDGG. A phosphoserine mark is found at Ser-234, Ser-249, and Ser-257. Positions 280–346 form a coiled coil; the sequence is SKQELIKEYL…LTENELHRQQ (67 aa). A mediates interaction with CCNT1 region spans residues 283–311; the sequence is ELIKEYLELEKCLSRKEDENNRLRLESKR. Residues 307-352 are required for inhibition of ESR1-dependent transcription; it reads LESKRLGGVDARVRELELELDRLRAENRQLLTENELHRQQERAPPS. Residues 337–356 form a disordered region; sequence LTENELHRQQERAPPSKFGD.

The protein belongs to the HEXIM family. Homooligomer and heterooligomer with HEXIM2; probably dimeric. Core component of the 7SK RNP complex, at least composed of 7SK RNA, LARP7, MEPCE, HEXIM1 (or HEXIM2) and P-TEFb (composed of CDK9 and CCNT1/cyclin-T1). Interacts with the N-CoR complex through NCOR1. Interacts with ESR1 and NR3C1. May interact with NF-kappa-B through RELA. Interacts with CCNT2; mediates formation of a tripartite complex with KPNA2. Part of the HDP-RNP complex composed of at least HEXIM1, PRKDC, XRCC5, XRCC6, paraspeckle proteins (SFPQ, NONO, PSPC1, RBM14, and MATR3) and NEAT1 non-coding RNA.

It localises to the nucleus. The protein resides in the cytoplasm. Its function is as follows. Transcriptional regulator which functions as a general RNA polymerase II transcription inhibitor. Core component of the 7SK RNP complex: in cooperation with 7SK snRNA sequesters P-TEFb in a large inactive 7SK snRNP complex preventing RNA polymerase II phosphorylation and subsequent transcriptional elongation. May also regulate NF-kappa-B, ESR1, NR3C1 and CIITA-dependent transcriptional activity. Plays a role in the regulation of DNA virus-mediated innate immune response by assembling into the HDP-RNP complex, a complex that serves as a platform for IRF3 phosphorylation and subsequent innate immune response activation through the cGAS-STING pathway. The polypeptide is Protein HEXIM1 (Hexim1) (Rattus norvegicus (Rat)).